Reading from the N-terminus, the 345-residue chain is Glycerol-3-phosphate dehydrogenase [NAD(P)+] (345 aa).

Positions 11, 12, 32, 33, and 106 each coordinate NADPH. Sn-glycerol 3-phosphate is bound by residues Lys-106, Gly-137, and Ser-139. Ala-141 is a binding site for NADPH. Lys-192, Asp-245, Ser-255, Arg-256, and Asn-257 together coordinate sn-glycerol 3-phosphate. Residue Lys-192 is the Proton acceptor of the active site. Position 256 (Arg-256) interacts with NADPH. NADPH-binding residues include Val-280 and Glu-282.

Belongs to the NAD-dependent glycerol-3-phosphate dehydrogenase family.

It localises to the cytoplasm. It catalyses the reaction sn-glycerol 3-phosphate + NAD(+) = dihydroxyacetone phosphate + NADH + H(+). The enzyme catalyses sn-glycerol 3-phosphate + NADP(+) = dihydroxyacetone phosphate + NADPH + H(+). The protein operates within membrane lipid metabolism; glycerophospholipid metabolism. Functionally, catalyzes the reduction of the glycolytic intermediate dihydroxyacetone phosphate (DHAP) to sn-glycerol 3-phosphate (G3P), the key precursor for phospholipid synthesis. This is Glycerol-3-phosphate dehydrogenase [NAD(P)+] from Bacillus velezensis (strain DSM 23117 / BGSC 10A6 / LMG 26770 / FZB42) (Bacillus amyloliquefaciens subsp. plantarum).